A 570-amino-acid chain; its full sequence is GDP-Man:Man(3)GlcNAc(2)-PP-Dol alpha-1,2-mannosyltransferase (570 aa).

The Lumenal portion of the chain corresponds to 1-7 (MKLADFV). A helical transmembrane segment spans residues 8–70 (TYVFGSLLAG…DFGWKNSSVR (63 aa)). Residues 71–200 (RAFILASERP…RLVESKSWPK (130 aa)) are Cytoplasmic-facing. Residues 201-221 (FTLLGQAYGSIILSIEALTTL) constitute an intramembrane region (helical). The Cytoplasmic portion of the chain corresponds to 222–446 (APDYWIDTMG…FGINAMWNEH (225 aa)). An intramembrane region (helical) is located at residues 447 to 467 (FGIAVVEYMASGLIPLCHASA). The Cytoplasmic segment spans residues 468-570 (GPLYDIVVPW…LNLTHNRMFS (103 aa)).

It belongs to the glycosyltransferase group 1 family.

It localises to the endoplasmic reticulum membrane. The enzyme catalyses an alpha-D-Man-(1-&gt;3)-[alpha-D-Man-(1-&gt;6)]-beta-D-Man-(1-&gt;4)-beta-D-GlcNAc-(1-&gt;4)-alpha-D-GlcNAc-diphospho-di-trans,poly-cis-dolichol + 2 GDP-alpha-D-mannose = an alpha-D-Man-(1-&gt;2)-alpha-D-Man-(1-&gt;2)-alpha-D-Man-(1-&gt;3)-[alpha-D-Man-(1-&gt;6)]-beta-D-Man-(1-&gt;4)-beta-D-GlcNAc-(1-&gt;4)-alpha-D-GlcNAc-diphospho-di-trans,poly-cis-dolichol + 2 GDP + 2 H(+). Its pathway is protein modification; protein glycosylation. In terms of biological role, GDP-Man:Man(3)GlcNAc(2)-PP-Dol alpha-1,2-mannosyltransferase that operates in the biosynthetic pathway of dolichol-linked oligosaccharides, the glycan precursors employed in protein asparagine (N)-glycosylation. The assembly of dolichol-linked oligosaccharides begins on the cytosolic side of the endoplasmic reticulum membrane and finishes in its lumen. The sequential addition of sugars to dolichol pyrophosphate produces dolichol-linked oligosaccharides containing fourteen sugars, including two GlcNAcs, nine mannoses and three glucoses. Once assembled, the oligosaccharide is transferred from the lipid to nascent proteins by oligosaccharyltransferases. Catalyzes, on the cytoplasmic face of the endoplasmic reticulum, the addition of the fourth and fifth mannose residues to the dolichol-linked oligosaccharide chain, to produce Man(5)GlcNAc(2)-PP-dolichol core oligosaccharide. This chain is GDP-Man:Man(3)GlcNAc(2)-PP-Dol alpha-1,2-mannosyltransferase (ALG11), found in Kluyveromyces lactis (strain ATCC 8585 / CBS 2359 / DSM 70799 / NBRC 1267 / NRRL Y-1140 / WM37) (Yeast).